A 448-amino-acid chain; its full sequence is Tryptophan dimethylallyltransferase 1 (448 aa).

Residues 80-81 and glutamate 89 each bind L-tryptophan; that span reads IL. The substrate site is built by arginine 100, lysine 186, and tyrosine 188. L-tryptophan-binding residues include tyrosine 190 and arginine 249. Substrate contacts are provided by arginine 262, lysine 264, tyrosine 266, glutamine 348, tyrosine 350, tyrosine 414, and tyrosine 418.

Belongs to the tryptophan dimethylallyltransferase family. In terms of assembly, homodimer.

It catalyses the reaction L-tryptophan + dimethylallyl diphosphate = 4-(3-methylbut-2-enyl)-L-tryptophan + diphosphate. It functions in the pathway alkaloid biosynthesis; ergot alkaloid biosynthesis. Functionally, tryptophan dimethylallyltransferase; part of the gene cluster that mediates the biosynthesis of fungal ergot alkaloid. DmaW catalyzes the first step of ergot alkaloid biosynthesis by condensing dimethylallyl diphosphate (DMAP) and tryptophan to form 4-dimethylallyl-L-tryptophan. The second step is catalyzed by the methyltransferase easF that methylates 4-dimethylallyl-L-tryptophan in the presence of S-adenosyl-L-methionine, resulting in the formation of 4-dimethylallyl-L-abrine. The catalase easC and the FAD-dependent oxidoreductase easE then transform 4-dimethylallyl-L-abrine to chanoclavine-I which is further oxidized by easD in the presence of NAD(+), resulting in the formation of chanoclavine-I aldehyde. Agroclavine dehydrogenase easG then mediates the conversion of chanoclavine-I aldehyde to agroclavine via a non-enzymatic adduct reaction: the substrate is an iminium intermediate that is formed spontaneously from chanoclavine-I aldehyde in the presence of glutathione. The presence of easA is not required to complete this reaction. Further conversion of agroclavine to paspalic acid is a two-step process involving oxidation of agroclavine to elymoclavine and of elymoclavine to paspalic acid, the second step being performed by the elymoclavine oxidase cloA. Paspalic acid is then further converted to D-lysergic acid. Ergopeptines are assembled from D-lysergic acid and three different amino acids by the D-lysergyl-peptide-synthetases composed each of a monomudular and a trimodular nonribosomal peptide synthetase subunit. LpsB and lpsC encode the monomodular subunits responsible for D-lysergic acid activation and incorporation into the ergopeptine backbone. LpsA1 and A2 subunits encode the trimodular nonribosomal peptide synthetase assembling the tripeptide portion of ergopeptines. LpsA1 is responsible for formation of the major ergopeptine, ergotamine, and lpsA2 for alpha-ergocryptine, the minor ergopeptine of the total alkaloid mixture elaborated by C.purpurea. D-lysergyl-tripeptides are assembled by the nonribosomal peptide synthetases and released as N-(D-lysergyl-aminoacyl)-lactams. Cyclolization of the D-lysergyl-tripeptides is performed by the Fe(2+)/2-ketoglutarate-dependent dioxygenase easH which introduces a hydroxyl group into N-(D-lysergyl-aminoacyl)-lactam at alpha-C of the aminoacyl residue followed by spontaneous condensation with the terminal lactam carbonyl group. This Claviceps purpurea (Ergot fungus) protein is Tryptophan dimethylallyltransferase 1.